The primary structure comprises 1237 residues: MASTSGALVDDNVLEVLRKAQLDAFISQFVFLFNVRRFDHFSHVRDKDMLEIGMQQVQIRQLREQILKMSREMWNRSDPKQVYIQADQSMPAQNSIDEKALIPNEQIKLYELIGEGSFAVVKRGTWTQSNGTHVNVAVKILRDISPNIMDDLRVEASHLLKLQHPSLIRLYGIVRQPAMMVFELCEGGSLLDRLRDDKKAILLVSRLHDYCMQIAKALQFLESKHCVHRDVAARNILLARDERTVKICDFGLMRALKENEQMYTMAPQKKVPFAWCPPEALRHRKFSHASDVWSYGVTIWEVFTFGEEPWVGCRAIDVLKNIDAGERLEKPKYCSERIYQIMKNCWKFNPAERCKFGAIREDLVAAMFLDAVARETYNSIQPGALQLTKGDEVVVVENTGQDWFGQNKKNQKFGTFPRSVVFAQTNNAVAAATAVTPQKVPTAPTIRIPPSHPPPAPLKPLNNNTKTSLNDRTSKISMPVAGSFIHTGHGDPLGGQSWGNPATIADMYLKNPVNGAPLSSMSSGAEIIASKELLTNGGRSTHQPAAPSPAVMSKIRGLSLDLPEYDDFDRAFDDGFSPSKIELPREFCGNDSVISGGSNSIGLANTYVMEPPKQAFDIRGNRVLPPTNKAPVLIPTNPAPSVISSTASAGITLSTNSSQMFTSQDRHSNMPANLFPELQHRLNQGSSTGNGVRPRPASSIGIQNNDLSMLNPQVNRPFSVVNVPIVQQPANIPCLVPTPAPPAPAHFSQPVSSQRVAQQQQNTLQKALNDELKGNLNKRPTGTTAPPSNGFNAPRADVAPVQQRPISSASIPALQPQPIQHIQKPIQPQQVRIPPSTAPVQKPVQVSAPTHSNVAPTTSSQASADARNPLPPKTSPPVSNTPITVAPVHAAPTTSAPSTSVVTRRPTSTTAQMSDEERRSRIAMDISSALPAPSALLYGSNSTSSLPSAAVSTASSVPSTARDNPVETRPSQPHVTMPPKKSSEPILSSEVLQPTRLPSATTSQAKPVTQPIRHPSPPVATVIPTAVVDKKPVSQNQGSNVPLFNITNSSNGYPQLNGYPNYGNGFQAYGYGMNYHQGYPGYQGYNSYGNGMGQLALTHNAVTSLPPLVPSENRFSGTAQPLGESDIMEFLGTQQRQAGSSSRAVPPASASTSAASGITDLSMADKMEVLYREADFTHKGNCDTMVSQCNGNTEQALKLLKQQHLVDMELAMSTETARQALEARQYDLPAAANMLLG.

Positions 107–369 (IKLYELIGEG…REDLVAAMFL (263 aa)) constitute a Protein kinase domain. Residues 113 to 121 (IGEGSFAVV) and Lys139 contribute to the ATP site. The active-site Proton acceptor is the Asp230. The region spanning 366 to 426 (AMFLDAVARE…PRSVVFAQTN (61 aa)) is the SH3 domain. Disordered stretches follow at residues 683-704 (NQGS…GIQN), 741-802 (PPAP…APVQ), 826-919 (IQPQ…EERR), 940-986 (SNST…SEPI), 999-1018 (SATT…PSPP), and 1134-1156 (QQRQ…SAAS). 3 stretches are compositionally biased toward polar residues: residues 749–766 (QPVS…TLQK), 778–791 (KRPT…SNGF), and 847–863 (SAPT…SQAS). Composition is skewed to low complexity over residues 881-910 (TPIT…TSTT) and 940-961 (SNST…PSTA). The segment covering 1138 to 1156 (AGSSSRAVPPASASTSAAS) has biased composition (low complexity).

Belongs to the protein kinase superfamily. Tyr protein kinase family. SYK/ZAP-70 subfamily. As to expression, ubiquitously present in all tissues tested. Expressed in the somatic cells of gut, pharynx, body wall muscle, neurons, skin and excretory canal cells.

Its subcellular location is the cytoplasm. The enzyme catalyses L-tyrosyl-[protein] + ATP = O-phospho-L-tyrosyl-[protein] + ADP + H(+). Its function is as follows. Tyrosine-protein kinase which plays a role in RNA-mediated gene silencing by mediating import of double-stranded RNA (dsRNA) into cells. Not required for import of ingested dsRNA into intestinal cells but involved in subsequent export from intestinal cells to internal tissues. This chain is Tyrosine-protein kinase sid-3 (sid-3), found in Caenorhabditis elegans.